Here is a 415-residue protein sequence, read N- to C-terminus: Corticotropin-releasing factor receptor 1 (415 aa).

Residues Met1–Thr24 form the signal peptide. At Ser25–Lys111 the chain is on the extracellular side. Disulfide bonds link Cys30–Cys54, Cys44–Cys87, and Cys68–Cys102. Residues Asn38, Asn45, Asn78, and Asn90 are each glycosylated (N-linked (GlcNAc...) asparagine). Residues Thr112–Leu142 traverse the membrane as a helical segment. Residues Arg143–Cys149 are Cytoplasmic-facing. The chain crosses the membrane as a helical span at residues Leu150–Leu174. Topologically, residues Thr175–Arg189 are extracellular. A disulfide bond links Cys188 and Cys258. Residues Leu190–Val218 traverse the membrane as a helical segment. Topologically, residues Leu219–Lys225 are cytoplasmic. Residues Leu226–Tyr253 traverse the membrane as a helical segment. Over Asp254–Asp269 the chain is Extracellular. The chain crosses the membrane as a helical span at residues Phe270–Met295. Residues Thr296–Thr306 lie on the Cytoplasmic side of the membrane. The helical transmembrane segment at Ile307 to Phe331 threads the bilayer. Over Val332–Glu338 the chain is Extracellular. A helical membrane pass occupies residues Ile339–Ser368. The Cytoplasmic segment spans residues Glu369 to Ile415.

Belongs to the G-protein coupled receptor 2 family. Interacts (via N-terminal extracellular domain) with CRF and UCN.

The protein localises to the cell membrane. In terms of biological role, G-protein coupled receptor for CRH (corticotropin-releasing factor) and UCN (urocortin). Has high affinity for CRH and UCN. Ligand binding causes a conformation change that triggers signaling via guanine nucleotide-binding proteins (G proteins) and down-stream effectors, such as adenylate cyclase. Promotes the activation of adenylate cyclase, leading to increased intracellular cAMP levels. This Xenopus laevis (African clawed frog) protein is Corticotropin-releasing factor receptor 1 (crhr1).